We begin with the raw amino-acid sequence, 391 residues long: Argininosuccinate synthase (391 aa).

6 to 14 contributes to the ATP binding site; sequence AYSGGLDTT. Tyrosine 84 serves as a coordination point for L-citrulline. Position 114 (glycine 114) interacts with ATP. Residues threonine 116, asparagine 120, and aspartate 121 each contribute to the L-aspartate site. Asparagine 120 lines the L-citrulline pocket. Positions 124, 171, 180, 253, and 265 each coordinate L-citrulline.

It belongs to the argininosuccinate synthase family. Type 1 subfamily. As to quaternary structure, homotetramer.

Its subcellular location is the cytoplasm. It catalyses the reaction L-citrulline + L-aspartate + ATP = 2-(N(omega)-L-arginino)succinate + AMP + diphosphate + H(+). It functions in the pathway amino-acid biosynthesis; L-arginine biosynthesis; L-arginine from L-ornithine and carbamoyl phosphate: step 2/3. This Saccharolobus solfataricus (strain ATCC 35092 / DSM 1617 / JCM 11322 / P2) (Sulfolobus solfataricus) protein is Argininosuccinate synthase.